A 148-amino-acid chain; its full sequence is Transcription antitermination protein NusB (148 aa).

It belongs to the NusB family.

Its function is as follows. Involved in transcription antitermination. Required for transcription of ribosomal RNA (rRNA) genes. Binds specifically to the boxA antiterminator sequence of the ribosomal RNA (rrn) operons. This Aquifex aeolicus (strain VF5) protein is Transcription antitermination protein NusB.